Reading from the N-terminus, the 109-residue chain is uncharacterized protein (109 aa).

2 helical membrane passes run 18 to 38 and 48 to 68; these read TTLA…LLTL and AGLI…VIAL.

It is found in the cell membrane. This is an uncharacterized protein from Mycobacterium tuberculosis (strain CDC 1551 / Oshkosh).